The primary structure comprises 1035 residues: NACHT, LRR and PYD domains-containing protein 3 (1035 aa).

Residues 1 to 93 enclose the Pyrin domain; that stretch reads MKMMSVRCKL…WEKAKKDQPE (93 aa). Ser5 is subject to Phosphoserine. A disulfide bridge links Cys8 with Cys106. Residue Tyr13 is modified to Phosphotyrosine. Cys128 is lipidated: S-palmitoyl cysteine. Residues 129-132 are required for binding to phosphatidylinositol 4-phosphate (PtdIns4P); sequence KKKK. Phosphotyrosine occurs at positions 134 and 138. Residues 138–208 enclose the FISNA domain; sequence YRRHVRSRFY…SSLKLELLFE (71 aa). Ser159 is subject to Phosphoserine. Tyr166 bears the Phosphotyrosine mark. Thr167 provides a ligand contact to ATP. Phosphoserine is present on Ser199. The region spanning 218–534 is the NACHT domain; sequence HTVVFQGAAG…EFFAAMYYLL (317 aa). 224–231 provides a ligand contact to ATP; sequence GAAGIGKT. Phosphoserine is present on residues Ser263 and Ser293. Lys322 participates in a covalent cross-link: Glycyl lysine isopeptide (Lys-Gly) (interchain with G-Cter in ubiquitin). Ser332 carries the post-translational modification Phosphoserine. The short motif at 353 to 357 is the KFERQ-like motif 1 element; that stretch reads LEKLQ. Lys428 is covalently cross-linked (Glycyl lysine isopeptide (Lys-Gly) (interchain with G-Cter in ubiquitin)). His520 contacts ATP. The short motif at 603–607 is the KFERQ-like motif 2 element; that stretch reads QVRLE. Residue Lys689 forms a Glycyl lysine isopeptide (Lys-Gly) (interchain with G-Cter in ubiquitin) linkage. Residues Ser727 and Ser734 each carry the phosphoserine modification. LRR repeat units lie at residues 741 to 761, 770 to 791, 798 to 818, 827 to 848, and 855 to 875; these read SLTELDLSDNTLGDPGMRVLC, NIQRLWLGRCGLTHQCCFNISS, KLVELDLSDNALGDFGVRLLC, NLQKLWLVSCCLTSACCQDLAL, and SLTRLYIGENALGDSGVQVLC. A KFERQ-like motif 3 motif is present at residues 797-801; sequence QKLVE. Ser805 bears the Phosphoserine mark. S-palmitoyl cysteine attachment occurs at residues Cys836, Cys837, and Cys843. Tyr860 carries the phosphotyrosine modification. Lys877 is covalently cross-linked (Glycyl lysine isopeptide (Lys-Gly) (interchain with G-Cter in ubiquitin)). LRR repeat units lie at residues 884–905, 912–932, 941–962, and 969–990; these read NLQKLGLVNSGLTSLCCSALTS, NLTHLYLRSNALGDMGLKLLC, KLQMLELDNCSLTSHSCWDLST, and SLRKLNLSNNDLGDLCVVTLCE. Cys957 is lipidated: S-palmitoyl cysteine. A Glycyl lysine isopeptide (Lys-Gly) (interchain with G-Cter in ubiquitin) cross-link involves residue Lys972. The KFERQ-like motif 4 motif lies at 990-994; it reads EVLKQ. Residue Ser1034 is modified to Phosphoserine.

This sequence belongs to the NLRP family. Sensor component of NLRP3 inflammasomes; inflammasomes are supramolecular complexes that assemble in the cytosol in response to pathogens and other damage-associated signals and play critical roles in innate immunity and inflammation. The core of NLRP3 inflammasomes consists of a signal sensor component (NLRP3), an adapter (PYCARD/ASC), which recruits an effector pro-inflammatory caspase (CASP1 and, possibly, CASP4 and CASP5). Homodecamer; inactive NLRP3 forms homodecameric double-ring cages that hide pyrin domains within NACHT-LRR rings to avoid premature activation. Interacts (via pyrin domain) with PYCARD/ASC (via pyrin domain); interaction is direct. Interacts (via LRR repeat domain) with NEK7 (via N-terminus); the interaction is required for the formation of the complex NLRP3:PYCARD, oligomerization of PYCARD/ASC and activation of CASP1. Interacts (via LRR repeat domain) with NR4A1/Nur77 (via N-terminus); the interaction is direct, requires activation of NR4A1 by its ligands NBRE-containing dsDNA and lipopolysaccharide, and stimulates the association of NLRP3 with NEK7 for non-canonical NLRP3 inflammasome activation. Interacts with CARD8; leading to inhibit formation of the NLRP3 inflammasome. Interacts with MEFV; this interaction targets NLRP3 to degradation by autophagy, hence preventing excessive IL1B- and IL18-mediated inflammation. Interacts with EIF2AK2/PKR; this interaction requires EIF2AK2 activity, is accompanied by EIF2AK2 autophosphorylation and promotes inflammasome assembly in response to specific stimuli. Interacts with GBP5 (via DAPIN domain); this interaction promotes inflammasome assembly in response to microbial and soluble, but not crystalline, agents. Interacts with PML (isoform PML-1) (via the leucine-rich repeat (LRR) domain); PML-mediated increase in NLRP3 inflammasome activation does not depend upon this interaction. Interacts (via NACHT domain) with DHX33 (via DEAH box); NLRP3 activation in presence of cytosolic dsRNA is mediated by DHX33. Interacts (via NACHT and LRR domains) with ARRB2; this interaction is direct and inducible by polyunsaturated fatty acids (PUFAs). Interacts (via NACHT domain) with DDX3X under both LPS-primed and inflammasome-activating conditions. Interacts with IRF4 (via the LRR domain); this interaction is direct and is required for optimal IRF4 binding to IL4 promoter and efficient IL4 transactivation during differentiation of Th2 helper T-cells. Interacts with MAVS; promoting localization to mitochondria and activation of the NLRP3 inflammasome. Interacts with MARK4; promoting localization of NLRP3 to the microtubule organizing center (MTOC). Interacts with TRIM50; this interaction also promotes NLRP3 oligomerization and subsequent inflammasome activation. Interacts with IRGM; preventing NLRP3 inflammasome assembly and promoting NLRP3 degradation. Interacts (via NACHT and LLR domains) with ABHD8; this interaction is enhanced in the presence of NLRP3 inflammasome inducers, such as ATP, nigericin, silica, or alum. Interaction with ABHD8 leads the recruitment of ZDHHC12, hence facilitating NLRP3 palmitoylation and degradation by the chaperone-mediated autophagy pathway (CMA), therefore attenuating NLRP3 inflammasome activation. Phosphorylation by MAPK8/JNK1 increases inflammasome activation by promoting deubiquitination by BRCC3 and NLRP3 homooligomerization. Phosphorylation at Ser-805 by CSNK1A1 prevents inflammasome activation by preventing NEK7 recruitment. Phosphorylation at Ser-5 in the pyrin domain inhibits homomultimerization of NLRP3 and activation of the NLRP3 inflammasome: dephosphorylation by protein phosphatase 2A (PP2A) promotes assembly of the NLRP3 inflammasome. Phosphorylation at Ser-293 by PKD/PRKD1 promotes NLRP3 inflammasome assembly. Phosphorylation by ERK1/MAPK3 promotes NLRP3 inflammasome assembly. Phosphorylation by BTK (at Tyr-134, Tyr-138 and Tyr-166) in the region that mediates binding to phosphatidylinositol phosphate, promotes relocalization of NLRP3 and assembly of the NLRP3 inflammasome. Phosphorylation at Tyr-860 inhibits NLRP3 inflammasome assembly: dephosphorylation by PTPN22 promotes inflammasome activation. Phosphorylated by LATS1 and LATS2 at Ser-263 following palmitoylation by ZDHHC1, promoting its relocalization to the microtubule organizing center (MTOC), where NLRP3 is activated by NEK7, leading to inflammasome assembly and activation. Post-translationally, ubiquitinated; undergoes both 'Lys-48'- and 'Lys-63'-linked polyubiquitination. Ubiquitination does not lead to degradation, but inhibits inflammasome activation. Deubiquitination is catalyzed by BRCC3 and associated with NLRP3 activation and inflammasome assembly. This process can be induced by the activation of Toll-like receptors (by LPS), through a non-transcriptional pathway dependent on the mitochondrial production of reactive oxygen species, and by ATP. Ubiquitinated by TRIM31 via 'Lys-48'-linked ubiquitination, leading to its degradation by the proteasome. Ubiquitinated at Lys-689 by the SCF(FBXL2) complex, leading to its degradation by the proteasome. Ubiquitinated by TRIM35 via 'lys-48' and 'Lys-63'-linked ubiquitination leading to inhibition of NLRP3 inflammasome activation. Undergoes 'Lys-27'-linked polyubiquitination by MARCHF5, leading to NLRP3-NEK7 complex formation and NLRP3 oligomerization. In terms of processing, the disulfide bond in the pyrin domain might play a role in reactive oxygen species-mediated activation. Palmitoylation by ZDHHC12 promotes NLRP3 degradation by the chaperone-mediated autophagy pathway (CMA) and therefore limits NLRP3 inflammasome activation. Interaction with ZDHHC12, and hence NLRP3 palmitoylation, is greatly enhanced by ABHD8. Following palmitoylation, HSPA8/HSC70 recognizes and binds the KFERQ-like motifs on NLRP3 and promotes NLRP3 recruitment to lysosomes, where it is degraded via the chaperone-mediated autophagy pathway in a LAMP2-dependent process. Palmitoylation at Cys-836 and Cys-837 by ZDHHC5 enhances its binding to NEK7 leading to inflammasome assembly and activation. Palmitoylation at Cys-128 and Cys-957 by ZDHHC1 facilitates phosphorylation at Ser-263 by LATS1 and LATS2, promoting its relocalization to the microtubule organizing center (MTOC), where NLRP3 is activated by NEK7, leading to inflammasome assembly and activation. Depalmitoylated by ABHD17A. Post-translationally, degraded via selective autophagy following interaction with IRGM. IRGM promotes NLRP3 recruitment to autophagosome membranes, promoting its SQSTM1/p62-dependent autophagy-dependent degradation.

Its subcellular location is the cytoplasm. The protein localises to the cytosol. The protein resides in the inflammasome. It localises to the cytoskeleton. It is found in the microtubule organizing center. Its subcellular location is the golgi apparatus membrane. The protein localises to the endoplasmic reticulum. The protein resides in the mitochondrion. It localises to the secreted. It is found in the nucleus. It catalyses the reaction ATP + H2O = ADP + phosphate + H(+). Its activity is regulated as follows. Under resting conditions, NLRP3 binds ADP and is autoinhibited. Inactive NLRP3 forms homodecameric double-ring cages that hide pyrin domains within NACHT-LRR rings to avoid premature activation. NLRP3 activation stimuli include extracellular ATP, nigericin, reactive oxygen species, crystals of monosodium urate or cholesterol, amyloid-beta fibers, environmental or industrial particles and nanoparticles, such as asbestos, silica, aluminum salts, cytosolic dsRNA, etc. Almost all stimuli trigger intracellular K(+) efflux. These stimuli lead to membrane perturbations that induce activation of NLRP3. Upon activation, NLRP3 is transported to microtubule organizing center (MTOC), where it is unlocked by NEK7, leading to its relocalization to dispersed trans-Golgi network (dTGN) vesicle membranes and recruitment of PYCARD/ASC for the formation of an active inflammasome complex. NEK7-activated NLRP3 forms a disk-shaped inflammasome. NLRP3 and PYCARD/ASC interact via their respective pyrin domains; interaction initiates speck formation (nucleation) which greatly enhances further addition of soluble PYCARD/ASC molecules to the speck in a prion-like polymerization process. Clustered PYCARD/ASC nucleates the formation of CASP1 filaments through the interaction of their respective CARD domains, acting as a platform for CASP1 polymerization and activation. Active CASP1 then processes IL1B and IL18 precursors, leading to the release of mature cytokines in the extracellular milieu and inflammatory response. NLRP3 inflammasome assembly is inhibited by IRGM, which impedes NLRP3 oligomerization. NLRP3 inflammasome is inhibited by cyclic AMP (cAMP), which directly binds NLRP3; inhibition is relieved by calcium-sensing receptor CASR, which inhibits production of cAMP. Specifically inhibited by sulfonylurea MCC950 (also named CP-456,773, CRID3), a potent and specific small-molecule inhibitor of the NLRP3 inflammasome that acts by preventing ATP hydrolysis. In terms of biological role, sensor component of the NLRP3 inflammasome, which mediates inflammasome activation in response to defects in membrane integrity, leading to secretion of inflammatory cytokines IL1B and IL18 and pyroptosis. In response to pathogens and other damage-associated signals that affect the integrity of membranes, initiates the formation of the inflammasome polymeric complex composed of NLRP3, CASP1 and PYCARD/ASC. Recruitment of pro-caspase-1 (proCASP1) to the NLRP3 inflammasome promotes caspase-1 (CASP1) activation, which subsequently cleaves and activates inflammatory cytokines IL1B and IL18 and gasdermin-D (GSDMD), promoting cytokine secretion and pyroptosis. Activation of NLRP3 inflammasome is also required for HMGB1 secretion; stimulating inflammatory responses. Under resting conditions, ADP-bound NLRP3 is autoinhibited. NLRP3 activation stimuli include extracellular ATP, nigericin, reactive oxygen species, crystals of monosodium urate or cholesterol, amyloid-beta fibers, environmental or industrial particles and nanoparticles, such as asbestos, silica, aluminum salts, cytosolic dsRNA, etc. Almost all stimuli trigger intracellular K(+) efflux. These stimuli lead to membrane perturbation and activation of NLRP3. Upon activation, NLRP3 is transported to microtubule organizing center (MTOC), where it is unlocked by NEK7, leading to its relocalization to dispersed trans-Golgi network (dTGN) vesicle membranes and formation of an active inflammasome complex. Associates with dTGN vesicle membranes by binding to phosphatidylinositol 4-phosphate (PtdIns4P). Shows ATPase activity. Independently of inflammasome activation, regulates the differentiation of T helper 2 (Th2) cells and has a role in Th2 cell-dependent asthma and tumor growth. During Th2 differentiation, required for optimal IRF4 binding to IL4 promoter and for IRF4-dependent IL4 transcription. Binds to the consensus DNA sequence 5'-GRRGGNRGAG-3'. May also participate in the transcription of IL5, IL13, GATA3, CCR3, CCR4 and MAF. The sequence is that of NACHT, LRR and PYD domains-containing protein 3 from Rattus norvegicus (Rat).